The primary structure comprises 360 residues: MGQRTPLFDLHLALGAKMVDFGGWDMPLHYGSQVEEHHQVRRDCGVFDVSHMNVIDVLGREAKAWLRRLLANDVDKLKTPGRALYSAMLDEQAGVIDDMIVYLTADGYRLVVNAATGAKDLAWMQSQLGDFDVQLLARSEMAMLAIQGPQARNRIAQLVSSARAELIRQLKPFEGLDDGDWFIARTGYTGEDGLEIMLPADEAQRFFNELVGAGISPIGLGARDTLRLEAGMNLYGQDIGEHVSPLASNMAWSIAWEPAERDFIGRQALESERAEGTAFKLVGLVLEERGVLRAHQVVRVAEIGEGEITSGSFSPTLSKSIALARVPMATADRAEVEIRGKWYPVRVVQPAFVRHGKTLI.

It belongs to the GcvT family. As to quaternary structure, the glycine cleavage system is composed of four proteins: P, T, L and H.

The enzyme catalyses N(6)-[(R)-S(8)-aminomethyldihydrolipoyl]-L-lysyl-[protein] + (6S)-5,6,7,8-tetrahydrofolate = N(6)-[(R)-dihydrolipoyl]-L-lysyl-[protein] + (6R)-5,10-methylene-5,6,7,8-tetrahydrofolate + NH4(+). In terms of biological role, the glycine cleavage system catalyzes the degradation of glycine. In Pseudomonas syringae pv. tomato (strain ATCC BAA-871 / DC3000), this protein is Aminomethyltransferase.